The following is a 148-amino-acid chain: Snaclec B1 (148 aa).

The signal sequence occupies residues M1 to A24. Cystine bridges form between C27–C38, C55–C144, and C121–C136. One can recognise a C-type lectin domain in the interval Y34–K145.

Belongs to the snaclec family. Heterodimer; disulfide-linked. In terms of tissue distribution, expressed by the venom gland.

It localises to the secreted. Interferes with one step of hemostasis (modulation of platelet aggregation, or coagulation cascade, for example). This chain is Snaclec B1, found in Macrovipera lebetinus (Levantine viper).